Reading from the N-terminus, the 314-residue chain is L-lactate dehydrogenase (314 aa).

Residues valine 16, aspartate 37, lysine 42, tyrosine 68, and 82–83 contribute to the NAD(+) site; that span reads GV. Substrate-binding residues include glutamine 85 and arginine 91. NAD(+) contacts are provided by residues serine 104, 121 to 123, and threonine 146; that span reads ASN. 123–126 is a substrate binding site; the sequence is NPVD. 151-154 lines the substrate pocket; it reads DTTR. Residues arginine 156 and histidine 171 each coordinate beta-D-fructose 1,6-bisphosphate. Histidine 178 serves as the catalytic Proton acceptor. Tyrosine 223 is subject to Phosphotyrosine. Residue threonine 232 participates in substrate binding.

This sequence belongs to the LDH/MDH superfamily. LDH family. In terms of assembly, homotetramer.

It is found in the cytoplasm. The enzyme catalyses (S)-lactate + NAD(+) = pyruvate + NADH + H(+). Its pathway is fermentation; pyruvate fermentation to lactate; (S)-lactate from pyruvate: step 1/1. Allosterically activated by fructose 1,6-bisphosphate (FBP). Its function is as follows. Catalyzes the conversion of lactate to pyruvate. The chain is L-lactate dehydrogenase from Lactococcus lactis subsp. cremoris (strain MG1363).